The primary structure comprises 179 residues: Shikimate kinase (179 aa).

15–20 contacts ATP; sequence GAGKTS. Residue Thr-19 coordinates Mg(2+). 3 residues coordinate substrate: Asp-37, Arg-61, and Gly-83. Arg-123 is an ATP binding site. Substrate is bound at residue Arg-142.

Belongs to the shikimate kinase family. In terms of assembly, monomer. The cofactor is Mg(2+).

The protein resides in the cytoplasm. It catalyses the reaction shikimate + ATP = 3-phosphoshikimate + ADP + H(+). It functions in the pathway metabolic intermediate biosynthesis; chorismate biosynthesis; chorismate from D-erythrose 4-phosphate and phosphoenolpyruvate: step 5/7. Catalyzes the specific phosphorylation of the 3-hydroxyl group of shikimic acid using ATP as a cosubstrate. In Coxiella burnetii (strain CbuG_Q212) (Coxiella burnetii (strain Q212)), this protein is Shikimate kinase.